Here is a 388-residue protein sequence, read N- to C-terminus: MVDNKIPEPGPAKLKRNAGPDEWLEAAKDCKYLSEQHMKQLCEIVKEYMMEESNIQPVSTPVTICGDIHGQFYDLLELFRVSGGMPDGSEAEAPKTQSAVITSDDIEPPSTISDPKLRKKLRNTFAPEDGSEDSSASQRDRSSSSGSRDVELKRNFVFLGDYVDRGYFSLETLTLLLCLKAKYPDRVTLVRGNHESRQITQVYGFYEECFQKYGNASVWKACCQVFDFMTLGAIIDGRVLCVHGGLSPEIRTLDQVRVVARAQEIPHEGAFCDLVWSDPDDVETWAVSPRGAGWLFGDKVADEFCHVNDLTLIARAHQLVNEGYKYHFANQNVVTVWSAPNYCYRCGNLASVCEIGDDLKPTFKLFSAVSDDQRHVPVSRPGRSEYFL.

Residues D67 and H69 each coordinate Mn(2+). The segment at 86 to 146 (PDGSEAEAPK…SQRDRSSSSG (61 aa)) is disordered. The Mn(2+) site is built by D161 and N193. The Proton donor role is filled by H194. H243 and H317 together coordinate Mn(2+).

This sequence belongs to the PPP phosphatase family. PP-6 (PP-V) subfamily. It depends on Mn(2+) as a cofactor.

It catalyses the reaction O-phospho-L-threonyl-[protein] + H2O = L-threonyl-[protein] + phosphate. Its function is as follows. Protein phosphatase that acts as a modulator of pkcA/mpkA activity involved in the cell wall integrity pathway. Plays an important role in regulation of adhesion, cell wall integrity, biofilm formation, and virulence. The chain is Serine/threonine-protein phosphatase sitA from Aspergillus fumigatus (strain ATCC MYA-4609 / CBS 101355 / FGSC A1100 / Af293) (Neosartorya fumigata).